The chain runs to 553 residues: Probable malate:quinone oxidoreductase (553 aa).

Residues Q534–P543 show a composition bias toward low complexity. The disordered stretch occupies residues Q534–L553.

Belongs to the MQO family. FAD is required as a cofactor.

The enzyme catalyses (S)-malate + a quinone = a quinol + oxaloacetate. The protein operates within carbohydrate metabolism; tricarboxylic acid cycle; oxaloacetate from (S)-malate (quinone route): step 1/1. In Citrobacter koseri (strain ATCC BAA-895 / CDC 4225-83 / SGSC4696), this protein is Probable malate:quinone oxidoreductase.